Here is a 200-residue protein sequence, read N- to C-terminus: LexA repressor (200 aa).

Catalysis depends on for autocatalytic cleavage activity residues serine 121 and lysine 158.

Belongs to the peptidase S24 family. In terms of assembly, homodimer.

The catalysed reaction is Hydrolysis of Ala-|-Gly bond in repressor LexA.. In terms of biological role, binds a consensus sequence 5'-TGTTC-N(4)-GAACA-3'; some genes have a tandem consensus sequence and their binding is cooperative. Binds to the promoters of a number of genes, including lexA and splB. Represses a number of genes involved in the response to DNA damage (SOS response). This is LexA repressor from Opitutus terrae (strain DSM 11246 / JCM 15787 / PB90-1).